Here is a 152-residue protein sequence, read N- to C-terminus: Small ribosomal subunit protein uS8m (152 aa).

The protein belongs to the universal ribosomal protein uS8 family.

It localises to the mitochondrion. The chain is Small ribosomal subunit protein uS8m (mrps8) from Dictyostelium discoideum (Social amoeba).